Consider the following 1046-residue polypeptide: Protein jim lovell (1046 aa).

Residues 54-109 are disordered; it reads TSDHAPMHSTPPTTPPTPPPLPLNMSQSASAVTEAATPENSLPATPPSEGALAVPS. Over residues 65-75 the composition is skewed to pro residues; sequence PTTPPTPPPLP. In terms of domain architecture, BTB spans 140 to 205; it reads VDVTLVCAET…MYRGEISVPQ (66 aa). 7 disordered regions span residues 290-342, 355-501, 632-655, 686-719, 758-791, 851-947, and 998-1046; these read LRRK…DAES, AERD…KLQD, PPFG…PGQA, EFGP…GMSS, RDMP…RSWT, EMLQ…APNA, and DCKS…TGHD. Residues 294-303 show a composition bias toward basic and acidic residues; sequence REQESDRDLE. Residues 315–324 show a composition bias toward basic residues; sequence PRRKQARPRR. Positions 365–380 are enriched in polar residues; that stretch reads QDNSQGEAEKISSSPA. Residues 383–412 show a composition bias toward basic and acidic residues; that stretch reads LVERAKEQKSMKEEGSDQPRSLNENHHQLE. Acidic residues predominate over residues 413 to 432; sequence LDDEDDDDQDHEEEEEQDIE. Over residues 433–443 the composition is skewed to basic and acidic residues; it reads ELIHTTNELRR. A compositionally biased stretch (low complexity) spans 445 to 454; the sequence is AAAAAANAAA. Gly residues predominate over residues 636–651; it reads GHNGGHPGNSGPGNGC. Positions 703-714 are enriched in pro residues; sequence DGPPHPPSPLPF. Residues 768-777 are compositionally biased toward basic residues; sequence LKKKMPRPKG. The 53-residue stretch at 781–833 folds into the HTH psq-type domain; the sequence is APRGGPPRSWTNTELTEALQHVWNKKMTTSQASRIFGIPYNSLLMYVRGKYGK. The segment covering 866-881 has biased composition (basic and acidic residues); the sequence is KNEKSKERKEKEKDKN. 2 stretches are compositionally biased toward low complexity: residues 882 to 897 and 912 to 925; these read SMSS…SQGG and LGPM…LGLP.

As to expression, initially expressed at blastoderm stage, transient accumulation at dorso-lateral positions of the embryo and differences along the longitudinal axis. At later stages of embryogenesis, expression is found exclusively in neural anlagen. Expressed in 4 posterior-most ventral unpaired median interneurons (VUM) neurons, VUM interneurons and one progeny of the median neuroblast (MNB).

Its subcellular location is the nucleus. Functionally, has a regulatory role during midline cell development. The chain is Protein jim lovell (lov) from Drosophila melanogaster (Fruit fly).